The primary structure comprises 395 residues: E3 ubiquitin-protein ligase RNFT1 (395 aa).

2 disordered regions span residues 1-58 (MQAS…SSRN) and 78-97 (YSHSEARPPDDFATESGEHG). The next 6 membrane-spanning stretches (helical) occupy residues 118 to 138 (ILILGIKLVMQHITGISLGIG), 165 to 185 (CAWLLVFLAGSSVLLYYTFHS), 193 to 213 (IFLNPTLEQLSFWEVLWIVGI), 216 to 236 (FILKFFFMGLKCLILLVPSFI), 258 to 278 (IFVPIPVWFRYLISYGEFGNV), and 283 to 303 (LGILLALLYLILKLLDFFGHL). The tract at residues 328–379 (CSDMDGICTICQAEFQKPVLLFCQHIFCEECITLWFNREKTCPLCRTVISEC) is required for ubiquitin ligase activity and for protection against ER stress-induced cell death. An RING-type zinc finger spans residues 335–373 (CTICQAEFQKPVLLFCQHIFCEECITLWFNREKTCPLCR).

In terms of tissue distribution, predominantly expressed in testis.

It is found in the early endosome membrane. It catalyses the reaction S-ubiquitinyl-[E2 ubiquitin-conjugating enzyme]-L-cysteine + [acceptor protein]-L-lysine = [E2 ubiquitin-conjugating enzyme]-L-cysteine + N(6)-ubiquitinyl-[acceptor protein]-L-lysine.. It participates in protein modification; protein ubiquitination. In terms of biological role, E3 ubiquitin-protein ligase that acts in the endoplasmic reticulum (ER)-associated degradation (ERAD) pathway, which targets misfolded proteins that accumulate in the endoplasmic reticulum (ER) for ubiquitination and subsequent proteasome-mediated degradation. Protects cells from ER stress-induced apoptosis. The chain is E3 ubiquitin-protein ligase RNFT1 (Rnft1) from Mus musculus (Mouse).